The sequence spans 37 residues: Mu-agatoxin-Aa1d (37 aa).

Intrachain disulfides connect C2–C18, C9–C23, C17–C33, and C25–C31. Residue N37 is modified to Asparagine amide.

This sequence belongs to the neurotoxin 07 (Beta/delta-agtx) family. 03 (aga-4) subfamily. Aga sub-subfamily. Expressed by the venom gland.

The protein localises to the secreted. Functionally, insecticidal neurotoxin that induces an irreversible spastic paralysis when injected into insects. Modifies presynaptic voltage-gated sodium channels (Nav), causing them to open at the normal resting potential of the nerve. This leads to spontaneous release of neurotransmitter and repetitive action potentials in motor neurons. The polypeptide is Mu-agatoxin-Aa1d (Agelenopsis aperta (North American funnel-web spider)).